A 373-amino-acid polypeptide reads, in one-letter code: Glutamine synthetase (373 aa).

An N-acetylalanine modification is found at alanine 2. Positions 2–25 (ATSASSHLNKGIKQVYMSLPQGEK) are required for glutamine-induced ubiquitination by CRL4(CRBN) and proteasomal degradation. 2 positions are modified to N6-acetyllysine: lysine 11 and lysine 14. Residues 24-106 (EKVQAMYIWI…VFCEVFKYNR (83 aa)) enclose the GS beta-grasp domain. Tyrosine 104 carries the post-translational modification Phosphotyrosine. Positions 113–373 (LRHTCKRIMD…TGDEPFQYKN (261 aa)) constitute a GS catalytic domain. An ATP-binding site is contributed by glutamate 134. 4 residues coordinate Mn(2+): glutamate 134, glutamate 136, glutamate 196, and glutamate 203. 203-208 (EFQIGP) is a binding site for ATP. Position 246 to 247 (246 to 247 (NW)) interacts with L-glutamate. A Mn(2+)-binding site is contributed by histidine 253. Residues 255-257 (NFS), arginine 319, and arginine 324 each bind ATP. Arginine 319 provides a ligand contact to L-glutamate. 336 to 338 (YFE) provides a ligand contact to ADP. Mn(2+) is bound at residue glutamate 338. An L-glutamate-binding site is contributed by arginine 340. The residue at position 343 (serine 343) is a Phosphoserine.

It belongs to the glutamine synthetase family. In terms of assembly, decamer; composed of two pentamers. Interacts with PALMD. Interacts with RHOJ. Interacts with BEST2; this interaction tethers a fraction of GLUL to the membrane, causing a decrease of cytosolic glutamine synthase (GS) activity and inhibits the chloride channel activity of BEST2 by affecting the gating at the aperture in the absence of intracellular glutamate. Requires Mg(2+) as cofactor. Mn(2+) serves as cofactor. Palmitoylated; undergoes autopalmitoylation. Post-translationally, acetylated by EP300/p300; acetylation is stimulated by increased glutamine levels and promotes ubiquitin-mediated proteasomal degradation. In terms of processing, ubiquitinated by ZNRF1. Ubiquitinated by the DCX (DDB1-CUL4-X-box) E3 ubiquitin-protein ligase complex called CRL4(CRBN), leading to proteasomal degradation.

The protein resides in the cytoplasm. It is found in the cytosol. It localises to the microsome. The protein localises to the mitochondrion. Its subcellular location is the cell membrane. The catalysed reaction is L-glutamate + NH4(+) + ATP = L-glutamine + ADP + phosphate + H(+). It carries out the reaction L-cysteinyl-[protein] + hexadecanoyl-CoA = S-hexadecanoyl-L-cysteinyl-[protein] + CoA. With respect to regulation, glutamine synthetase activity is inhibited by methionine sulfoximine (MSO). Its function is as follows. Glutamine synthetase that catalyzes the ATP-dependent conversion of glutamate and ammonia to glutamine. Its role depends on tissue localization: in the brain, it regulates the levels of toxic ammonia and converts neurotoxic glutamate to harmless glutamine, whereas in the liver, it is one of the enzymes responsible for the removal of ammonia. Plays a key role in ammonium detoxification during erythropoiesis: the glutamine synthetase activity is required to remove ammonium generated by porphobilinogen deaminase (HMBS) during heme biosynthesis to prevent ammonium accumulation and oxidative stress. Essential for proliferation of fetal skin fibroblasts. Independently of its glutamine synthetase activity, required for endothelial cell migration during vascular development. Involved in angiogenesis by regulating membrane localization and activation of the GTPase RHOJ, possibly by promoting RHOJ palmitoylation. May act as a palmitoyltransferase for RHOJ: able to autopalmitoylate and then transfer the palmitoyl group to RHOJ. Plays a role in ribosomal 40S subunit biogenesis. Through the interaction with BEST2, inhibits BEST2 channel activity by affecting the gating at the aperture in the absence of intracellular L-glutamate, but sensitizes BEST2 to intracellular L-glutamate, which promotes the opening of BEST2 and thus relieves its inhibitory effect on BEST2. The chain is Glutamine synthetase from Canis lupus familiaris (Dog).